A 110-amino-acid chain; its full sequence is Small ribosomal subunit protein uS10 (110 aa).

It belongs to the universal ribosomal protein uS10 family. In terms of assembly, part of the 30S ribosomal subunit.

In terms of biological role, involved in the binding of tRNA to the ribosomes. The chain is Small ribosomal subunit protein uS10 from Ehrlichia ruminantium (strain Gardel).